The chain runs to 250 residues: GPI-anchored hemophore PGA10 (250 aa).

Residues 1–20 (MMSFSLLSIVSIALAATVSA) form the signal peptide. Residues 26–137 (NAYTAYPSVA…DALAKAANAA (112 aa)) form the CFEM domain. Disulfide bonds link Cys-54-Cys-94, Cys-58-Cys-89, Cys-68-Cys-75, and Cys-77-Cys-110. A heme-binding site is contributed by Asp-72. The disordered stretch occupies residues 165 to 219 (STSHESKVAETSVAQQTASTEKSSAAETSRAKETSKAEESSKAEETSVAQSSSSA). Positions 178–192 (AQQTASTEKSSAAET) are enriched in low complexity. Over residues 193–209 (SRAKETSKAEESSKAEE) the composition is skewed to basic and acidic residues. The span at 210 to 219 (TSVAQSSSSA) shows a compositional bias: low complexity. A lipid anchor (GPI-anchor amidated asparagine) is attached at Asn-230. The propeptide at 231-250 (AGNMPVIAIGGVIAAFAALI) is removed in mature form.

Belongs to the RBT5 family. Post-translationally, the GPI-anchor is attached to the protein in the endoplasmic reticulum and serves to target the protein to the cell surface. There, the glucosamine-inositol phospholipid moiety is cleaved off and the GPI-modified mannoprotein is covalently attached via its lipidless GPI glycan remnant to the 1,6-beta-glucan of the outer cell wall layer. In terms of processing, mannosylated.

The protein resides in the secreted. Its subcellular location is the cell wall. It is found in the cell membrane. Functionally, heme-binding protein involved in heme-iron utilization. The ability to acquire iron from host tissues is a major virulence factor of pathogenic microorganisms. Involved in biofilm formation. This Candida albicans (strain SC5314 / ATCC MYA-2876) (Yeast) protein is GPI-anchored hemophore PGA10.